The sequence spans 429 residues: Probable M18 family aminopeptidase 2 (429 aa).

Positions 82, 156, and 401 each coordinate Zn(2+).

Belongs to the peptidase M18 family. Requires Zn(2+) as cofactor.

The polypeptide is Probable M18 family aminopeptidase 2 (Pseudomonas fluorescens (strain Pf0-1)).